Here is a 528-residue protein sequence, read N- to C-terminus: Inorganic phosphate transporter 1-2 (528 aa).

At 1 to 24 (MAGSQLNVLVKLDQAKTQWYHFMA) the chain is on the cytoplasmic side. The helical transmembrane segment at 25–45 (IVIAGMGFFTDAYDLFCIALV) threads the bilayer. Residues 46–71 (TKLLGRLYYTDITKPNPGTLPPNVSS) lie on the Extracellular side of the membrane. Residues 72 to 92 (AVTGVALCGTLAGQLFFGWLG) form a helical membrane-spanning segment. At 93–99 (DKLGRKS) the chain is on the cytoplasmic side. Residues 100–120 (VYGFTLILMVVCSIASGLSFG) form a helical membrane-spanning segment. Residues 121 to 125 (HTPKS) are Extracellular-facing. The chain crosses the membrane as a helical span at residues 126–146 (VIATLCFFRFWLGFGIGGDYP). The Cytoplasmic portion of the chain corresponds to 147-163 (LSATIMSEYASKKTRGA). A helical transmembrane segment spans residues 164 to 184 (FIAAVFAMQGFGILFGAIVAL). The Extracellular portion of the chain corresponds to 185-212 (VVSAGFRHAYPAPSYAQNPAASLAPQAD). The chain crosses the membrane as a helical span at residues 213–232 (YTWRLILMFGTIPAGLTYYW). Residues 233-296 (RMKMPETARY…RQFMKRHGMH (64 aa)) lie on the Cytoplasmic side of the membrane. The chain crosses the membrane as a helical span at residues 297-317 (LLATTSTWFLLDIAFYSQNLF). At 318–348 (QKDIFSKVGWIPPAKTMNALEELYRISRAQA) the chain is on the extracellular side. Residues 349-369 (LIALCGTIPGYWFTVAFIDIV) traverse the membrane as a helical segment. The Cytoplasmic portion of the chain corresponds to 370-371 (GR). The chain crosses the membrane as a helical span at residues 372 to 392 (FWIQIMGFFMMTVFMLALGVP). Residues 393–405 (YDHWTHPAHHTGF) lie on the Extracellular side of the membrane. The helical transmembrane segment at 406-426 (VVLYALTFFFANFGPNSTTFI) threads the bilayer. Residues 427 to 442 (VPAEIFPARLRSTCHG) are Cytoplasmic-facing. Residues 443 to 463 (ISAASGKAGAIIGAFGFLYAA) traverse the membrane as a helical segment. Over 464 to 481 (QDQHNPDAGYSRGIGIRN) the chain is Extracellular. Residues 482 to 502 (ALFVLAGTNFLGMLMTLLVPE) form a helical membrane-spanning segment. Residues 503-528 (SKGLSLEEMSKDNVVDETAQEAIAQA) are Cytoplasmic-facing.

The protein belongs to the major facilitator superfamily. Phosphate:H(+) symporter (TC 2.A.1.9) family. In terms of tissue distribution, expressed in the root stele and leaf phloem and xylem.

It is found in the membrane. Its function is as follows. Low-affinity transporter for inorganic phosphate (Pi). Involved in internal Pi transport from root to shoot. Responsible for most of the PHR2-mediated accumulation of excess shoot Pi under abundant Pi conditions, but not for PHO2-mediated accumulation of excess shoot Pi. Acts as a H(+):phosphate symporter. This Oryza sativa subsp. japonica (Rice) protein is Inorganic phosphate transporter 1-2 (PTH1-2).